A 2717-amino-acid chain; its full sequence is Naringenin synthase (2717 aa).

Positions 13 to 422 (HHAVESRDKV…VGRKKELIIR (410 aa)) are adenylation (A) domain. Residues 531 to 617 (AAVEALVLAE…AVRDYLFNRL (87 aa)) enclose the Carrier 1 domain. The residue at position 576 (serine 576) is an O-(pantetheine 4'-phosphoryl)serine. One can recognise a Ketosynthase family 3 (KS3) domain in the interval 638–1066 (AEPIAIISMA…GTNAHIILEQ (429 aa)). Catalysis depends on for beta-ketoacyl synthase activity residues cysteine 810, histidine 945, and histidine 988. Positions 1204–1462 (PIFSRAFKEA…GPSAVLSPHV (259 aa)) constitute a Malonyl-CoA:ACP transacylase (MAT) domain. An N-terminal hotdog fold region spans residues 1549 to 1688 (HGVLYRTTSI…GTLKLISLPP (140 aa)). A PKS/mFAS DH domain is found at 1549-1847 (HGVLYRTTSI…LRAVQPPVVE (299 aa)). The segment at 1561 to 1842 (TNDIICAGFV…ISEVMLRAVQ (282 aa)) is dehydratase (DH) domain. The active-site Proton acceptor; for dehydratase activity is the histidine 1581. Positions 1703–1847 (NSEVDVSKAY…LRAVQPPVVE (145 aa)) are C-terminal hotdog fold. Aspartate 1764 (proton donor; for dehydratase activity) is an active-site residue. Positions 2008 to 2186 (GTVLITGGTG…AVSLAWGPWA (179 aa)) constitute a Ketoreductase (KR) domain. The 78-residue stretch at 2277-2354 (SRSDTLLGLV…ALVQYLLDRI (78 aa)) folds into the Carrier 2 domain. Serine 2313 bears the O-(pantetheine 4'-phosphoryl)serine mark. Residues 2361 to 2373 (EIELDQDVAEEET) are compositionally biased toward acidic residues. Residues 2361–2412 (EIELDQDVAEEETVSGTNGHQNGHQNGTQNGHSNGHANGASTNGDATDGIDP) are disordered. Residues 2375-2396 (SGTNGHQNGHQNGTQNGHSNGH) are compositionally biased toward low complexity. Residues 2497–2711 (SLSVYSAVAA…AIAVEIEHWA (215 aa)) are thioester reductase (TE) domain.

This sequence in the N-terminal section; belongs to the NRP synthetase family. Pantetheine 4'-phosphate serves as cofactor.

In terms of biological role, PKS-NRPS hybrid synthetase that, alone, is sufficient to produce naringenin chalcone, the direct precursor of naringenin, by using p-coumaric acid (p-CA) or p-hydroxybenzoic acid (p-HBA) with the involvement of malonyl-CoA molecules. The adenylation (A) domain activates p-CA or p-HBA as adenylates, which are transferred to the thiol group of the pantetheinyl residue of the T domain, and further transferred to the adjacent PKS portion of fnsA. Besides p-CA and p-HBA, the A domain is also able to activate other substrates such as cinnamic acid and salicyclic acid. Within the PKS portion of fnsA, p-CA and p-HBA act as starter units for respectively three or four malonyl-CoA molecules for elongation by the AT and KS domains of fnsA. Afterwards, naringenin chalcone is cyclized through Claisen condensation and thereby released either spontaneously or catalyzed by the TE domain. Finally, naringenin chalcone is converted to naringenin spontaneously or by a chalcone isomerase. The polypeptide is Naringenin synthase (Pestalotiopsis fici (strain W106-1 / CGMCC3.15140)).